The following is a 590-amino-acid chain: Aspartate--tRNA(Asp/Asn) ligase (590 aa).

L-aspartate is bound at residue Glu175. The aspartate stretch occupies residues Gln199–Lys202. Arg221 and His450 together coordinate L-aspartate. Residue Arg221–Glu223 coordinates ATP. Glu484 contacts ATP. Position 491 (Arg491) interacts with L-aspartate. Residue Gly536–Arg539 participates in ATP binding.

Belongs to the class-II aminoacyl-tRNA synthetase family. Type 1 subfamily. As to quaternary structure, homodimer.

The protein resides in the cytoplasm. It catalyses the reaction tRNA(Asx) + L-aspartate + ATP = L-aspartyl-tRNA(Asx) + AMP + diphosphate. Its function is as follows. Aspartyl-tRNA synthetase with relaxed tRNA specificity since it is able to aspartylate not only its cognate tRNA(Asp) but also tRNA(Asn). Reaction proceeds in two steps: L-aspartate is first activated by ATP to form Asp-AMP and then transferred to the acceptor end of tRNA(Asp/Asn). The polypeptide is Aspartate--tRNA(Asp/Asn) ligase (Rhodopseudomonas palustris (strain BisB18)).